A 598-amino-acid polypeptide reads, in one-letter code: Protein VASCULAR ASSOCIATED DEATH 1, chloroplastic (598 aa).

Residues 1–11 (MAMLSTASVSG) are compositionally biased toward polar residues. The interval 1 to 64 (MAMLSTASVS…PSRGGDNQSE (64 aa)) is disordered. The transit peptide at 1 to 68 (MAMLSTASVS…GDNQSEVISK (68 aa)) directs the protein to the chloroplast. The N-linked (GlcNAc...) asparagine glycan is linked to Asn61. The region spanning 70 to 134 (EEYRQLFRLP…PFAEISCVKR (65 aa)) is the GRAM domain. The VASt domain occupies 272–444 (DFTKVAEAKF…MAHELLKQKK (173 aa)). 2 N-linked (GlcNAc...) asparagine glycosylation sites follow: Asn329 and Asn494. Residues 507-527 (QVIVLAFAVILLMQVTIVVLL) traverse the membrane as a helical segment. The stretch at 553–595 (WLEKRMHFLREEMMMVEDRLQRMRQDHAALKAQFHHLERLLRR) forms a coiled coil.

The protein localises to the membrane. It localises to the plastid. It is found in the chloroplast. Functionally, involved in ethylene- and salicylic acid-dependent cell death control associated with cells in the vicinity of vascular bundles. The protein is Protein VASCULAR ASSOCIATED DEATH 1, chloroplastic of Arabidopsis thaliana (Mouse-ear cress).